The sequence spans 159 residues: MAMASATATLSFKTPSLSLSPPSTRCSAAQGISLTHFNKQLKSTLNLSSSSSISSSKVQPIVLKNKRISTVDSSVSTSSPSFTVFAAKGYKMKTHKASAKRFRVTGKGKIVRRRAGKQHLLAKKNTKRKNRLSKLIQVDRSDYDNVIGALPYLKVNRKV.

The N-terminal 86 residues, 1-86 (MAMASATATL…TSSPSFTVFA (86 aa)), are a transit peptide targeting the chloroplast.

Component of the chloroplast large ribosomal subunit (LSU). Mature 70S chloroplast ribosomes of higher plants consist of a small (30S) and a large (50S) subunit. The 30S small subunit contains 1 molecule of ribosomal RNA (16S rRNA) and 24 different proteins. The 50S large subunit contains 3 rRNA molecules (23S, 5S and 4.5S rRNA) and 33 different proteins.

The protein resides in the plastid. The protein localises to the chloroplast. In terms of biological role, component of the chloroplast ribosome (chloro-ribosome), a dedicated translation machinery responsible for the synthesis of chloroplast genome-encoded proteins, including proteins of the transcription and translation machinery and components of the photosynthetic apparatus. This Spinacia oleracea (Spinach) protein is Large ribosomal subunit protein bL35c (RPL35).